We begin with the raw amino-acid sequence, 51 residues long: Insulin (51 aa).

3 disulfides stabilise this stretch: cysteine 8–cysteine 37, cysteine 20–cysteine 50, and cysteine 36–cysteine 41.

It belongs to the insulin family. As to quaternary structure, heterodimer of a B chain and an A chain linked by two disulfide bonds.

The protein localises to the secreted. Functionally, insulin decreases blood glucose concentration. It increases cell permeability to monosaccharides, amino acids and fatty acids. It accelerates glycolysis, the pentose phosphate cycle, and glycogen synthesis in liver. The polypeptide is Insulin (Seriola quinqueradiata (Five-ray yellowtail)).